Here is a 433-residue protein sequence, read N- to C-terminus: ATP-dependent RNA helicase SUB2 (433 aa).

Residues 1 to 17 show a composition bias toward acidic residues; the sequence is MSAENQEELLDYSDSEE. The interval 1–39 is disordered; the sequence is MSAENQEELLDYSDSEEIAVPTTTQAGEGESANDKEADK. The Q motif signature appears at 49–77; it reads TGFRDFLLKPELLRAIGDCGFEHPSEVQQ. The Helicase ATP-binding domain maps to 80–255; the sequence is IPQSILGTDV…KKFMQNPLEI (176 aa). 93–100 contributes to the ATP binding site; the sequence is AKSGLGKT. The DEAD box signature appears at 202–205; the sequence is DECD. One can recognise a Helicase C-terminal domain in the interval 267–428; sequence GLQQYYIKLE…EFPEEGVDPS (162 aa).

Belongs to the DEAD box helicase family. DECD subfamily.

The protein resides in the nucleus. It carries out the reaction ATP + H2O = ADP + phosphate + H(+). Its function is as follows. ATP-binding RNA helicase involved in transcription elongation and required for the export of mRNA out of the nucleus. SUB2 also plays a role in pre-mRNA splicing and spliceosome assembly. May be involved in rDNA and telomeric silencing, and maintenance of genome integrity. This Lodderomyces elongisporus (strain ATCC 11503 / CBS 2605 / JCM 1781 / NBRC 1676 / NRRL YB-4239) (Yeast) protein is ATP-dependent RNA helicase SUB2 (SUB2).